The primary structure comprises 422 residues: E3 ubiquitin-protein ligase CBLL2 (422 aa).

The segment at 54–94 (CDKCDLPIKIYGRIIPCKHAFCYNCANLYDKIGYKICPRCS) adopts an RING-type zinc-finger fold. The HYB domain stretch occupies residues 93–151 (CSYPVLRIEEHKRGSVFMCSVVQGCKRTYLSQKSLQAHIKRRHKRARKQVASASLEKLR). A C2H2-type zinc finger spans residues 109–135 (FMCSVVQGCKRTYLSQKSLQAHIKRRH). Disordered regions lie at residues 190 to 213 (MQQM…PELS) and 378 to 422 (QTDA…HRPY). The span at 195-205 (HEQHNQPHKDL) shows a compositional bias: basic and acidic residues. Residues 393–405 (LPPPPPTWSPPPS) are compositionally biased toward pro residues. The segment covering 410 to 422 (GSHHSYQRRHRPY) has biased composition (basic residues).

As to quaternary structure, homodimer.

The protein localises to the cytoplasm. It carries out the reaction S-ubiquitinyl-[E2 ubiquitin-conjugating enzyme]-L-cysteine + [acceptor protein]-L-lysine = [E2 ubiquitin-conjugating enzyme]-L-cysteine + N(6)-ubiquitinyl-[acceptor protein]-L-lysine.. It participates in protein modification; protein ubiquitination. In terms of biological role, E3 ubiquitin ligase catalyzing the covalent attachment of ubiquitin moieties onto substrate proteins. May operate on tyrosine-phosphorylated SRC substrates. In Macaca fascicularis (Crab-eating macaque), this protein is E3 ubiquitin-protein ligase CBLL2 (CBLL2).